We begin with the raw amino-acid sequence, 408 residues long: 3-hydroxy-3-methylglutaryl-coenzyme A reductase (408 aa).

Residues E101 and D307 each act as charge relay system in the active site. H403 acts as the Proton donor in catalysis.

The protein belongs to the HMG-CoA reductase family.

The enzyme catalyses (R)-mevalonate + 2 NADP(+) + CoA = (3S)-3-hydroxy-3-methylglutaryl-CoA + 2 NADPH + 2 H(+). Its pathway is metabolic intermediate biosynthesis; (R)-mevalonate biosynthesis; (R)-mevalonate from acetyl-CoA: step 3/3. Converts HMG-CoA to mevalonate. The sequence is that of 3-hydroxy-3-methylglutaryl-coenzyme A reductase (hmgA) from Pyrococcus abyssi (strain GE5 / Orsay).